Reading from the N-terminus, the 167-residue chain is Lipoprotein signal peptidase (167 aa).

The next 3 helical transmembrane spans lie at 7–27 (LFLLLGLTLTAGLDQAVKYWV), 61–81 (FSHWGIIAITIIVIIFLLWLW), and 87–107 (NKFLMRFGLVLIIGGAIGNLI). Active-site residues include Asp-117 and Asp-136. The chain crosses the membrane as a helical span at residues 126 to 146 (IFYFAIFNLADSFITLGVIVI).

The protein belongs to the peptidase A8 family.

It localises to the cell inner membrane. The enzyme catalyses Release of signal peptides from bacterial membrane prolipoproteins. Hydrolyzes -Xaa-Yaa-Zaa-|-(S,diacylglyceryl)Cys-, in which Xaa is hydrophobic (preferably Leu), and Yaa (Ala or Ser) and Zaa (Gly or Ala) have small, neutral side chains.. It participates in protein modification; lipoprotein biosynthesis (signal peptide cleavage). Its function is as follows. This protein specifically catalyzes the removal of signal peptides from prolipoproteins. The chain is Lipoprotein signal peptidase from Bartonella tribocorum (strain CIP 105476 / IBS 506).